The primary structure comprises 214 residues: 14-3-3 protein homolog 2 (214 aa).

Belongs to the 14-3-3 family.

This is 14-3-3 protein homolog 2 from Schistosoma mansoni (Blood fluke).